Consider the following 28-residue polypeptide: Heat shock protein 81 (28 aa).

The ATP site is built by asparagine 5 and aspartate 21.

It belongs to the heat shock protein 90 family. Homodimer.

It is found in the cytoplasm. Putative molecular chaperone that may promote the maturation, structural maintenance and proper regulation of specific target proteins. The polypeptide is Heat shock protein 81 (Pseudotsuga menziesii (Douglas-fir)).